Consider the following 702-residue polypeptide: Polyribonucleotide nucleotidyltransferase (702 aa).

Mg(2+) contacts are provided by Asp484 and Asp490. Residues 551 to 610 enclose the KH domain; the sequence is PHIESFKIAVEKIGALIGPGGKTVKSLSDQYRVTINTDSDGTVTVSGRDAQSVFDAKVAV. Residues 620 to 688 enclose the S1 motif domain; the sequence is GRVYQGVVKR…RMGRLNLSYI (69 aa).

The protein belongs to the polyribonucleotide nucleotidyltransferase family. The cofactor is Mg(2+).

The protein localises to the cytoplasm. The enzyme catalyses RNA(n+1) + phosphate = RNA(n) + a ribonucleoside 5'-diphosphate. Its function is as follows. Involved in mRNA degradation. Catalyzes the phosphorolysis of single-stranded polyribonucleotides processively in the 3'- to 5'-direction. In Treponema pallidum (strain Nichols), this protein is Polyribonucleotide nucleotidyltransferase.